A 321-amino-acid chain; its full sequence is Thioredoxin reductase tcpT (321 aa).

FAD contacts are provided by residues 14–17, 36–41, H49, and A114; these read GGPA and DSGRYR. A disulfide bond links C138 and C141. FAD is bound by residues D282 and 289–290; that span reads NV.

It belongs to the class-II pyridine nucleotide-disulfide oxidoreductase family. In terms of assembly, homodimer. It depends on FAD as a cofactor.

It participates in secondary metabolite biosynthesis. Thioredoxin reductase; part of the gene cluster that mediates the biosynthesis of an unusual class of epipolythiodioxopiperazines (ETPs) lacking the reactive thiol group important for toxicity. Firstly, L-tyrosine is prenylated by tcpD, before undergoing condensation with L-glycine in a reaction catalyzed by the NRPS tcpP leading to the diketopiperazine (DKP) backbone. Afterwards the alpha-carbon of tyrosine is oxidized by the cytochrome P450 tcpC to form a hydroxyl group. However, in contrast other ETP biosynthesis pathways studied so far, tcpC is not able to bishydroxylate the DKP at both alpha-carbon positions, but hydroxylates the alpha-carbon of the tyrosine part and the nitrogen of the glycine part. The next steps involve an alpha,beta-elimination reaction catalyzed by tcpI, a methylation by the methyltransferase tcpN the action of the four enzyme cascade tcpG/K/J/I. Due to a dysfunctional cytochrome P450 monooxygenase tcpC, the pathway leads to the biosynthesis of probable non-toxic metabolites lacking the reactive thiol group. The sequence is that of Thioredoxin reductase tcpT from Claviceps purpurea (strain 20.1) (Ergot fungus).